The sequence spans 499 residues: Protein flp (499 aa).

Transmembrane regions (helical) follow at residues 6-26, 389-409, 433-453, and 471-491; these read LYFL…IYIT, FNIV…FSAY, LTLC…YLIL, and LTLT…LLIL.

Its subcellular location is the cell membrane. Its precise function is unknown. Has no penicillin-binding activity and is not involved in methicillin resistance. This chain is Protein flp (flp), found in Staphylococcus aureus (strain MRSA252).